Reading from the N-terminus, the 349-residue chain is Protein Wnt-7a (349 aa).

An N-terminal signal peptide occupies residues 1 to 31 (MNRKARRCLGHLFLSLGMVYLRIGGFSSVVA). Disulfide bonds link C73-C84, C123-C131, C133-C152, C200-C214, and C202-C209. Residues N83 and N127 are each glycosylated (N-linked (GlcNAc...) asparagine). S206 is lipidated: O-palmitoleoyl serine; by PORCN. Positions 238 to 266 (VEPVRASRNKRPTFLKIKKPLSYRKPMDT) are disordered linker. 6 disulfides stabilise this stretch: C278/C309, C294/C304, C308/C348, C324/C339, C326/C336, and C331/C332. N-linked (GlcNAc...) asparagine glycosylation occurs at N295.

The protein belongs to the Wnt family. In terms of assembly, forms a soluble 1:1 complex with AFM; this prevents oligomerization and is required for prolonged biological activity. The complex with AFM may represent the physiological form in body fluids. Interacts with PORCN. Interacts (via intrinsically disordered linker region) with RECK; interaction with RECK confers ligand selectivity for Wnt7 in brain endothelial cells and allows these cells to selectively respond to Wnt7. Interacts with FZD5. In terms of processing, palmitoleoylation is required for efficient binding to frizzled receptors. Depalmitoleoylation leads to Wnt signaling pathway inhibition.

Its subcellular location is the secreted. The protein localises to the extracellular space. It is found in the extracellular matrix. Functionally, ligand for members of the frizzled family of seven transmembrane receptors that functions in the canonical Wnt/beta-catenin signaling pathway. Plays an important role in embryonic development, including dorsal versus ventral patterning during limb development, skeleton development and urogenital tract development. Required for central nervous system (CNS) angiogenesis and blood-brain barrier regulation. Required for normal, sexually dimorphic development of the Mullerian ducts, and for normal fertility in both sexes. Required for normal neural stem cell proliferation in the hippocampus dentate gyrus. Required for normal progress through the cell cycle in neural progenitor cells, for self-renewal of neural stem cells, and for normal neuronal differentiation and maturation. Promotes formation of synapses via its interaction with FZD5. The chain is Protein Wnt-7a (WNT7A) from Pongo pygmaeus (Bornean orangutan).